Reading from the N-terminus, the 680-residue chain is Penicillin-binding protein 2B (680 aa).

The Cytoplasmic portion of the chain corresponds to 1–8; that stretch reads MRKFNSHS. Residues 9 to 29 form a helical membrane-spanning segment; sequence IPIRLNLLFSIVILLFMTIIG. At 30–680 the chain is on the extracellular side; it reads RLLYMQVLNK…NLYQKYHPMN (651 aa). Ser-386 functions as the Acyl-ester intermediate in the catalytic mechanism.

The protein belongs to the transpeptidase family. In terms of assembly, interacts with MreC in the elongasome.

Its subcellular location is the cell membrane. Functionally, a transpeptidase that forms peptide cross-links between adjacent glycan strands in cell wall peptidoglycan (PG). Part of the elongasome machinery that synthesizes peripheral PG. This chain is Penicillin-binding protein 2B, found in Streptococcus pneumoniae serotype 2 (strain D39 / NCTC 7466).